Consider the following 387-residue polypeptide: Chorismate synthase (387 aa).

NADP(+) is bound by residues R39 and R45. The tract at residues 92 to 113 (PVEEGSEEKRRVSRPRPGHADL) is disordered. FMN is bound by residues 130–132 (RSS), 250–251 (QA), G295, 310–314 (KPIPT), and R336.

The protein belongs to the chorismate synthase family. As to quaternary structure, homotetramer. The cofactor is FMNH2.

The catalysed reaction is 5-O-(1-carboxyvinyl)-3-phosphoshikimate = chorismate + phosphate. It participates in metabolic intermediate biosynthesis; chorismate biosynthesis; chorismate from D-erythrose 4-phosphate and phosphoenolpyruvate: step 7/7. Catalyzes the anti-1,4-elimination of the C-3 phosphate and the C-6 proR hydrogen from 5-enolpyruvylshikimate-3-phosphate (EPSP) to yield chorismate, which is the branch point compound that serves as the starting substrate for the three terminal pathways of aromatic amino acid biosynthesis. This reaction introduces a second double bond into the aromatic ring system. This chain is Chorismate synthase, found in Brevibacillus brevis (strain 47 / JCM 6285 / NBRC 100599).